The primary structure comprises 208 residues: Pyridoxine/pyridoxamine 5'-phosphate oxidase (208 aa).

Residues 55–60 (RMVLLK), 70–71 (YT), K76, K77, and Q99 contribute to the FMN site. K60 contacts substrate. Y117, R121, and S125 together coordinate substrate. Residues 134–135 (QS) and W179 contribute to the FMN site. Residue 185–187 (RLH) coordinates substrate. R189 is an FMN binding site.

Belongs to the pyridoxamine 5'-phosphate oxidase family. Homodimer. It depends on FMN as a cofactor.

The enzyme catalyses pyridoxamine 5'-phosphate + O2 + H2O = pyridoxal 5'-phosphate + H2O2 + NH4(+). It carries out the reaction pyridoxine 5'-phosphate + O2 = pyridoxal 5'-phosphate + H2O2. It participates in cofactor metabolism; pyridoxal 5'-phosphate salvage; pyridoxal 5'-phosphate from pyridoxamine 5'-phosphate: step 1/1. It functions in the pathway cofactor metabolism; pyridoxal 5'-phosphate salvage; pyridoxal 5'-phosphate from pyridoxine 5'-phosphate: step 1/1. Its function is as follows. Catalyzes the oxidation of either pyridoxine 5'-phosphate (PNP) or pyridoxamine 5'-phosphate (PMP) into pyridoxal 5'-phosphate (PLP). The polypeptide is Pyridoxine/pyridoxamine 5'-phosphate oxidase (Brucella ovis (strain ATCC 25840 / 63/290 / NCTC 10512)).